We begin with the raw amino-acid sequence, 150 residues long: Monooxygenase nsrS (150 aa).

This sequence belongs to the avfA family.

The protein operates within secondary metabolite biosynthesis. In terms of biological role, monooxygenase; part of the gene cluster that mediates the biosynthesis of the tetrahydroxanthone dimer neosartorin, which exhibits antibacterial activity. The two different monomeric units appear to be synthesized by the same set of enzymes, among which the Baeyer-Villiger monooxygenase nsrF is the key enzyme for the divergence of the biosynthetic routes. The pathway begins with the synthesis of atrochrysone thioester by the polyketide synthase nsrB. The atrochrysone carboxyl ACP thioesterase nsrC then breaks the thioester bond and releases the atrochrysone carboxylic acid from AacuL. Atrochrysone carboxylic acid is decarboxylated by the decarboxylase nsrE, and oxidized by the anthrone oxygenase nsrD to yield emodin. Emodin is then reduced to emodin hydroquinone by the oxidoreductase nsrR. A-ring reduction by the short chain dehydrogenase nsrJ, dehydration by the scytalone dehydratase-like protein nsrI and probable spontaneous re-oxidation, results in overall deoxygenation to chrysophanol. The Baeyer-Villiger monooxygenase nsrF accepts chrysophanol as a substrate to insert one oxygen atom at two different positions to yield the precursors of both monomric units. NsrF is promiscuous/flexible in interacting with the 2 (non methylated and methylated) aromatic rings of chrysophanol, thus diverging the biosynthetic pathway at this point. After the hydrolysis of the lactones, methylesterification by the methyltransferase nsrG yields respectively moniliphenone and 2,2',6'-trihydroxy-4-methyl-6-methoxya-cyldiphenylmethanone. The next steps are the hydroxylation by the FAD-dependent monooxygenase nsrK, followed by isomerization by the monooxygenase nsrQ. The short chain dehydrogenase/reductase nsrO then catalyzes the C-5 ketoreduction to give the xanthone skeleton of blennolide C and 5-acetylblennolide A. The acetyltransferase nsrL has a strict substrate specificity and uses only blennolide A but not blennolide C to yield 5-acetylblennolide A as the single-acetylated product. In the final step of the biosynthesis, the heterodimerization of the 2 xanthones, blennolide C and 5-acetylblennolide A, is catalyzed by the cytochrome P450 monooxygenase nsrP. NsrP can utilize at least three different xanthones as its substrates to perform the dimerization reaction. The polypeptide is Monooxygenase nsrS (Aspergillus novofumigatus (strain IBT 16806)).